The primary structure comprises 104 residues: MKVHVRKNDTVVVISGKDKGKTGEVLRVIPKTGKVVVKGVNLVKKHQKPNRQNMQGGIIEMEAAINSSKVMLFCEKCKKATRISHKLLENGAKVRVCKKCGETF.

It belongs to the universal ribosomal protein uL24 family. In terms of assembly, part of the 50S ribosomal subunit.

Its function is as follows. One of two assembly initiator proteins, it binds directly to the 5'-end of the 23S rRNA, where it nucleates assembly of the 50S subunit. Functionally, one of the proteins that surrounds the polypeptide exit tunnel on the outside of the subunit. The chain is Large ribosomal subunit protein uL24 from Clostridium perfringens (strain SM101 / Type A).